The primary structure comprises 317 residues: Beta-ketoacyl-[acyl-carrier-protein] synthase III (317 aa).

Residues Cys-112 and His-244 contribute to the active site. The ACP-binding stretch occupies residues 245–249 (QANIR). The active site involves Asn-274.

The protein belongs to the thiolase-like superfamily. FabH family. As to quaternary structure, homodimer.

It is found in the cytoplasm. It catalyses the reaction malonyl-[ACP] + acetyl-CoA + H(+) = 3-oxobutanoyl-[ACP] + CO2 + CoA. It functions in the pathway lipid metabolism; fatty acid biosynthesis. Its function is as follows. Catalyzes the condensation reaction of fatty acid synthesis by the addition to an acyl acceptor of two carbons from malonyl-ACP. Catalyzes the first condensation reaction which initiates fatty acid synthesis and may therefore play a role in governing the total rate of fatty acid production. Possesses both acetoacetyl-ACP synthase and acetyl transacylase activities. Its substrate specificity determines the biosynthesis of branched-chain and/or straight-chain of fatty acids. The polypeptide is Beta-ketoacyl-[acyl-carrier-protein] synthase III (Rickettsia felis (strain ATCC VR-1525 / URRWXCal2) (Rickettsia azadi)).